The sequence spans 325 residues: MTAPLVLAVPSKGRLQENAEAFFARAGLTLAKPRGVRDYRGTIAELDNVEIAYLSASEIASQLARGMVHLGVTGEDLIRESIVDADKRVALIDGLGFGSANVVVAVPQSWIDVRTMADLDDVTIGFRAQHNRRMRVATKYINLTRVFFASHGVVDYRIVESAGATEGAPAVGTAEMIVDITTTGATLAANGLKVLDDGVILRSQANLVASRDADWSNGARETARIILDHIAARARANQYREVRTRFTGCDTTLLAEAHDRFGVVSPFGGPTSSGMVTLHCPPDRLYALGSFLRQHGAETVSIASLDYVFDRENPLFVRLEAFLRP.

This sequence belongs to the ATP phosphoribosyltransferase family. Long subfamily. Mg(2+) serves as cofactor.

The protein resides in the cytoplasm. It catalyses the reaction 1-(5-phospho-beta-D-ribosyl)-ATP + diphosphate = 5-phospho-alpha-D-ribose 1-diphosphate + ATP. It functions in the pathway amino-acid biosynthesis; L-histidine biosynthesis; L-histidine from 5-phospho-alpha-D-ribose 1-diphosphate: step 1/9. Feedback inhibited by histidine. Catalyzes the condensation of ATP and 5-phosphoribose 1-diphosphate to form N'-(5'-phosphoribosyl)-ATP (PR-ATP). Has a crucial role in the pathway because the rate of histidine biosynthesis seems to be controlled primarily by regulation of HisG enzymatic activity. This chain is ATP phosphoribosyltransferase, found in Nitrobacter hamburgensis (strain DSM 10229 / NCIMB 13809 / X14).